The chain runs to 662 residues: MSKQTLSFQAEVAQLLHLVTHSLYSNQEIFLRELISNASDACDKLRFAGLNQPALFEDAPQLEVRVSFDQTARTLTITDNGIGMSQQEAIEHLGTIAKSGTKDFMGQLSGDQKQDAQLIGQFGVGFYSGFIVADKITVESRRAGLPASEGVRWASGGTGDFEVETIDRPARGTSVILHLRDSAEEYLNNWKLKSIISRYSDHISLPILMEKQEWKDGELINPGDEKGGRQPGAMVKTGDWETVNQASALWARPKKDVSDAQYAEFYKTISHDPLAPLTWAHNRVEGSTEYTQLLYIPAKAPFDLWNRDKKAGVKLYVKRVFIMDDAEALLPTYLRFVKGVIDSADLPLNVSRELLQESRDVRAIREGSTKRVLSMLEDLARHDRHDSPAPQPAEGADRVSDVVDADDKAKEGKYSQFYAEFGAVLKEGLGEDFANRERLARLLRFASTSSDQASVGLADYKARMKEGQEAIYYITADTLAAAKHSPQLEVFKKKGIEVLLMTDRVDEWALNYLHEFDGTPLQSVAKGAVDLGKLQDEAEKKAAEEAAEAFKPLLARLKETLKDKAEDVRVTTRLVDSPACLVVHGDGMSTQLARLLKQAGQQAPETKPVLEVNASHALVRKLDGSQHFDDLAHILFDQALLAEGGLPADPAAYVKRVNALLV.

Residues 1 to 352 form an a; substrate-binding region; that stretch reads MSKQTLSFQA…SADLPLNVSR (352 aa). The b stretch occupies residues 353–594; the sequence is ELLQESRDVR…GDGMSTQLAR (242 aa). Residues 382 to 402 form a disordered region; it reads HDRHDSPAPQPAEGADRVSDV. Residues 595 to 662 form a c region; that stretch reads LLKQAGQQAP…YVKRVNALLV (68 aa).

The protein belongs to the heat shock protein 90 family. In terms of assembly, homodimer.

The protein localises to the cytoplasm. Its function is as follows. Molecular chaperone. Has ATPase activity. In Verminephrobacter eiseniae (strain EF01-2), this protein is Chaperone protein HtpG.